Consider the following 906-residue polypeptide: Protein translocase subunit SecA (906 aa).

ATP contacts are provided by residues glutamine 86, glycine 104 to threonine 108, and aspartate 499. The disordered stretch occupies residues valine 865–serine 885. Zn(2+) contacts are provided by cysteine 890, cysteine 892, cysteine 901, and histidine 902.

Belongs to the SecA family. In terms of assembly, monomer and homodimer. Part of the essential Sec protein translocation apparatus which comprises SecA, SecYEG and auxiliary proteins SecDF-YajC and YidC. Zn(2+) is required as a cofactor.

The protein localises to the cell inner membrane. It localises to the cytoplasm. The enzyme catalyses ATP + H2O + cellular proteinSide 1 = ADP + phosphate + cellular proteinSide 2.. Part of the Sec protein translocase complex. Interacts with the SecYEG preprotein conducting channel. Has a central role in coupling the hydrolysis of ATP to the transfer of proteins into and across the cell membrane, serving both as a receptor for the preprotein-SecB complex and as an ATP-driven molecular motor driving the stepwise translocation of polypeptide chains across the membrane. In Rickettsia canadensis (strain McKiel), this protein is Protein translocase subunit SecA.